The chain runs to 158 residues: NAD(P)H-quinone oxidoreductase subunit J, chloroplastic (158 aa).

The protein belongs to the complex I 30 kDa subunit family. In terms of assembly, NDH is composed of at least 16 different subunits, 5 of which are encoded in the nucleus.

The protein resides in the plastid. Its subcellular location is the chloroplast thylakoid membrane. It carries out the reaction a plastoquinone + NADH + (n+1) H(+)(in) = a plastoquinol + NAD(+) + n H(+)(out). It catalyses the reaction a plastoquinone + NADPH + (n+1) H(+)(in) = a plastoquinol + NADP(+) + n H(+)(out). Its function is as follows. NDH shuttles electrons from NAD(P)H:plastoquinone, via FMN and iron-sulfur (Fe-S) centers, to quinones in the photosynthetic chain and possibly in a chloroplast respiratory chain. The immediate electron acceptor for the enzyme in this species is believed to be plastoquinone. Couples the redox reaction to proton translocation, and thus conserves the redox energy in a proton gradient. The protein is NAD(P)H-quinone oxidoreductase subunit J, chloroplastic of Fagopyrum esculentum subsp. ancestrale (Wild buckwheat).